The primary structure comprises 944 residues: Protocadherin gamma-C5 (944 aa).

Residues 1–29 (MGPKTLPQLAGKWQVLCMLSLCCWGWVSG) form the signal peptide. Cadherin domains follow at residues 30–133 (QLRY…SPSF), 134–242 (ATPE…APTF), 243–350 (QSSV…APEV), 351–454 (LLAS…APRF), 455–564 (NQQL…APAV), and 571–677 (WEHS…MPKS). Residues 30–693 (QLRYSVVEES…PPERSDLTLY (664 aa)) lie on the Extracellular side of the membrane. Residues Asn265, Asn443, and Asn547 are each glycosylated (N-linked (GlcNAc...) asparagine). Residues 694–714 (LIVALATVSLLSLVTFTFLSA) form a helical membrane-spanning segment. Residues 715–944 (KCLQGNADGD…KKKSGKKEKK (230 aa)) lie on the Cytoplasmic side of the membrane. Disordered stretches follow at residues 722-747 (DGDG…QSSP), 812-853 (SNTL…WPNN), and 914-944 (ATLT…KEKK). A compositionally biased stretch (polar residues) spans 820–853 (QQAPPNTDWRFSQAQRPGTSGSQNGDDTGTWPNN). Positions 934 to 944 (NKKKSGKKEKK) are enriched in basic residues.

Its subcellular location is the cell membrane. Potential calcium-dependent cell-adhesion protein. May be involved in the establishment and maintenance of specific neuronal connections in the brain. This is Protocadherin gamma-C5 (PCDHGC5) from Homo sapiens (Human).